A 3387-amino-acid polypeptide reads, in one-letter code: Genome polyprotein (3387 aa).

Topologically, residues 1 to 100 (MNQRKKVVRP…LNILNGRKRS (100 aa)) are cytoplasmic. Residues 36–71 (LFSGKGPLRMVLAFITFLRVLSIPPTAGILKRWGQL) form a hydrophobic; homodimerization of capsid protein C region. Residues 100–113 (STMTLLCLIPTVMA) constitute a propeptide, ER anchor for the capsid protein C, removed in mature form by serine protease NS3. A helical transmembrane segment spans residues 101-117 (TMTLLCLIPTVMAFHLS). Residues 118–237 (TRDGEPLMIV…GAWKHAQRVE (120 aa)) are Extracellular-facing. Residue asparagine 182 is glycosylated (N-linked (GlcNAc...) asparagine; by host). The chain crosses the membrane as a helical span at residues 238-258 (SWILRNPGFALLAGFMAYMIG). Residues 259–265 (QTGIQRT) lie on the Cytoplasmic side of the membrane. The helical transmembrane segment at 266–279 (VFFVLMMLVAPSYG) threads the bilayer. Residues 280 to 723 (MRCVGVGNRD…AVHQVFGSVY (444 aa)) are Extracellular-facing. Disulfide bonds link cysteine 282–cysteine 309, cysteine 339–cysteine 400, cysteine 353–cysteine 384, and cysteine 371–cysteine 395. N-linked (GlcNAc...) asparagine; by host glycosylation occurs at asparagine 346. The fusion peptide stretch occupies residues 377-390 (DRGWGNGCGLFGKG). Asparagine 432 carries an N-linked (GlcNAc...) asparagine; by host glycan. Disulfide bonds link cysteine 464–cysteine 564 and cysteine 581–cysteine 612. A helical membrane pass occupies residues 724-744 (TTMFGGVSWMVRILIGFLVLW). The Cytoplasmic segment spans residues 745 to 750 (IGTNSR). Residues 751 to 771 (NTSMAMTCIAVGGITLFLGFT) form a helical membrane-spanning segment. Over 772-1194 (VQADMGCVVS…MLGDTMSGRI (423 aa)) the chain is Extracellular. Intrachain disulfides connect cysteine 778–cysteine 789, cysteine 829–cysteine 917, cysteine 953–cysteine 997, cysteine 1054–cysteine 1103, cysteine 1065–cysteine 1087, and cysteine 1086–cysteine 1090. 2 N-linked (GlcNAc...) asparagine; by host glycosylation sites follow: asparagine 904 and asparagine 981. A helical membrane pass occupies residues 1195–1218 (GGQVHLAIMAVFKMSPGYVLGVFL). Over 1219–1224 (RKLTSR) the chain is Lumenal. Residues 1225–1243 (ETALMVIGMAMTTVLSIPH) form a helical membrane-spanning segment. The Cytoplasmic segment spans residues 1244 to 1267 (DLMELIDGISLGLILLKIVTQFDN). The chain crosses the membrane as a helical span at residues 1268-1288 (TQVGTLALSLTFIRSTMPLVM). Position 1289 (alanine 1289) is a topological domain, lumenal. A helical membrane pass occupies residues 1290–1308 (WRTIMAVLFVVTLIPLCRT). The Lumenal segment spans residues 1309–1316 (SCLQKQSH). The chain crosses the membrane as a helical span at residues 1317–1337 (WVEITALILGAQALPVYLMTL). Residues 1338–1345 (MKGASRRS) are Cytoplasmic-facing. Residues 1346–1366 (WPLNEGIMAVGLVSLLGSALL) form a helical membrane-spanning segment. The Lumenal portion of the chain corresponds to 1367–1369 (KND). Residues 1370–1390 (VPLAGPMVAGGLLLAAYVMSG) form a helical membrane-spanning segment. Topologically, residues 1391 to 1437 (SSADLSLEKAANVQWDEMADITGSSPIIEVKQDEDGSFSIRDVEETN) are cytoplasmic. The interacts with and activates NS3 protease stretch occupies residues 1397-1436 (LEKAANVQWDEMADITGSSPIIEVKQDEDGSFSIRDVEET). The segment at residues 1438–1458 (MITLLVKLALITVSGLYPLAI) is an intramembrane region (helical). Topologically, residues 1459–2143 (PVTMTLWYMW…QHALNELPES (685 aa)) are cytoplasmic. The Peptidase S7 domain maps to 1475-1652 (SGALWDVPSP…ERIGEPDYEV (178 aa)). Residues histidine 1525, aspartate 1549, and serine 1609 each act as charge relay system; for serine protease NS3 activity in the active site. The Helicase ATP-binding domain occupies 1654 to 1810 (EDIFRKKRLT…QSNSPIEDIE (157 aa)). The interval 1658–1661 (RKKR) is important for RNA-binding. Position 1667 to 1674 (1667 to 1674 (LHPGAGKT)) interacts with ATP. The DEAH box motif lies at 1758–1761 (DEAH). The Helicase C-terminal domain occupies 1820–1987 (TGFDWITDYQ…IIPTLFGPER (168 aa)). At lysine 1862 the chain carries N6-acetyllysine; by host. Residues 2144-2164 (LETLMLVALLGAMTAGTFLFF) form a helical membrane-spanning segment. Residues 2165 to 2169 (MQGKG) lie on the Lumenal side of the membrane. The helical intramembrane region spans 2170–2190 (IGKLSMGLITIAVASGLLWVA). Glutamate 2191 is a topological domain (lumenal). The helical transmembrane segment at 2192-2212 (LQPQWIAASIILEFFLMVLLI) threads the bilayer. Topologically, residues 2213-2225 (PEPEKQRTPQDNQ) are cytoplasmic. Residues 2226 to 2246 (LIYVILTILTIIGLIAANEMG) traverse the membrane as a helical segment. Over 2247-2270 (LIEKTKTDFGFYQVKTETTILDVD) the chain is Lumenal. Positions 2271–2291 (LRPASAWTLYAVATTILTPML) form an intramembrane region, helical. The Lumenal segment spans residues 2292 to 2301 (RHTIENTSAN). Asparagine 2297 and asparagine 2301 each carry an N-linked (GlcNAc...) asparagine; by host glycan. Positions 2302-2322 (LSLAAIANQAAVLMGLGKGWP) form an intramembrane region, helical. Residues 2323–2343 (LHRVDLGVPLLAMGCYSQVNP) are Lumenal-facing. Residues 2344 to 2364 (TTLTASLVMLLVHYAIIGPGL) form a helical membrane-spanning segment. Over 2365–2409 (QAKATREAQKRTAAGIMKNPTVDGITVIDLEPISYDPKFEKQLGQ) the chain is Cytoplasmic. The chain crosses the membrane as a helical span at residues 2410–2430 (VMLLVLCAGQLLLMRTTWAFC). Topologically, residues 2431–2455 (EVLTLATGPILTLWEGNPGRFWNTT) are lumenal. Residue asparagine 2453 is glycosylated (N-linked (GlcNAc...) asparagine; by host). A helical membrane pass occupies residues 2456-2476 (IAVSTANIFRGSYLAGAGLAF). At 2477–3387 (SLIKNAQTPR…SAPSESEGVL (911 aa)) the chain is on the cytoplasmic side. An mRNA cap 0-1 NS5-type MT domain is found at 2489 to 2751 (TGTTGETLGE…DVDLGAGTRS (263 aa)). Serine 2543 serves as a coordination point for S-adenosyl-L-methionine. Serine 2543 is modified (phosphoserine). Residue lysine 2548 is the For 2'-O-MTase activity of the active site. The short motif at 2564-2567 (VVDL) is the SUMO-interacting motif element. Glycine 2573, tryptophan 2574, threonine 2591, lysine 2592, aspartate 2618, and valine 2619 together coordinate S-adenosyl-L-methionine. Aspartate 2633 (for 2'-O-MTase activity) is an active-site residue. Isoleucine 2634 contributes to the S-adenosyl-L-methionine binding site. Active-site for 2'-O-MTase activity residues include lysine 2668 and glutamate 2704. Tyrosine 2706 provides a ligand contact to S-adenosyl-L-methionine. Residues glutamate 2925, histidine 2929, cysteine 2934, and cysteine 2937 each coordinate Zn(2+). Positions 3016-3166 (LMYADDTAGW…PLDERFSTSL (151 aa)) constitute a RdRp catalytic domain. Zn(2+)-binding residues include histidine 3200, cysteine 3216, and cysteine 3335.

In the N-terminal section; belongs to the class I-like SAM-binding methyltransferase superfamily. mRNA cap 0-1 NS5-type methyltransferase family. As to quaternary structure, homodimer. Interacts (via N-terminus) with host EXOC1 (via C-terminus); this interaction results in EXOC1 degradation through the proteasome degradation pathway. Forms heterodimers with envelope protein E in the endoplasmic reticulum and Golgi. In terms of assembly, homodimer; in the endoplasmic reticulum and Golgi. Interacts with protein prM. Interacts with non-structural protein 1. As to quaternary structure, homodimer; Homohexamer when secreted. Interacts with envelope protein E. Interacts (via N-terminus) with serine protease NS3. In terms of assembly, forms a heterodimer with serine protease NS3. May form homooligomers. As to quaternary structure, forms a heterodimer with NS2B. Interacts with NS4B. Interacts with unphosphorylated RNA-directed RNA polymerase NS5; this interaction stimulates RNA-directed RNA polymerase NS5 guanylyltransferase activity. Interacts with host SHFL. Interacts with host MAVS; this interaction inhibits the synthesis of IFN-beta. Interacts with host SHFL. Interacts with host AUP1; the interaction occurs in the presence of Dengue virus NS4B and induces lipophagy which facilitates production of virus progeny particles. In terms of assembly, interacts with serine protease NS3. As to quaternary structure, homodimer. Interacts with host STAT2; this interaction inhibits the phosphorylation of the latter, and, when all viral proteins are present (polyprotein), targets STAT2 for degradation. Interacts with serine protease NS3. Interacts with host PAF1 complex; the interaction may prevent the recruitment of the PAF1 complex to interferon-responsive genes, and thus reduces the immune response. Specific enzymatic cleavages in vivo yield mature proteins. Cleavages in the lumen of endoplasmic reticulum are performed by host signal peptidase, whereas cleavages in the cytoplasmic side are performed by serine protease NS3. Signal cleavage at the 2K-4B site requires a prior NS3 protease-mediated cleavage at the 4A-2K site. Post-translationally, cleaved in post-Golgi vesicles by a host furin, releasing the mature small envelope protein M, and peptide pr. This cleavage is incomplete as up to 30% of viral particles still carry uncleaved prM. In terms of processing, N-glycosylated. N-glycosylated. The excreted form is glycosylated and this is required for efficient secretion of the protein from infected cells. Post-translationally, acetylated by host KAT5. Acetylation modulates NS3 RNA-binding and unwinding activities and plays an important positive role for viral replication. In terms of processing, sumoylation of RNA-directed RNA polymerase NS5 increases NS5 protein stability allowing proper viral RNA replication. Phosphorylated on serines residues. This phosphorylation may trigger NS5 nuclear localization.

Its subcellular location is the virion. It is found in the host nucleus. The protein resides in the host cytoplasm. The protein localises to the host perinuclear region. It localises to the secreted. Its subcellular location is the virion membrane. It is found in the host endoplasmic reticulum membrane. The protein resides in the host mitochondrion. It catalyses the reaction Selective hydrolysis of -Xaa-Xaa-|-Yaa- bonds in which each of the Xaa can be either Arg or Lys and Yaa can be either Ser or Ala.. The enzyme catalyses RNA(n) + a ribonucleoside 5'-triphosphate = RNA(n+1) + diphosphate. The catalysed reaction is a ribonucleoside 5'-triphosphate + H2O = a ribonucleoside 5'-diphosphate + phosphate + H(+). It carries out the reaction ATP + H2O = ADP + phosphate + H(+). It catalyses the reaction a 5'-end (5'-triphosphoguanosine)-ribonucleoside in mRNA + S-adenosyl-L-methionine = a 5'-end (N(7)-methyl 5'-triphosphoguanosine)-ribonucleoside in mRNA + S-adenosyl-L-homocysteine. The enzyme catalyses a 5'-end (N(7)-methyl 5'-triphosphoguanosine)-ribonucleoside in mRNA + S-adenosyl-L-methionine = a 5'-end (N(7)-methyl 5'-triphosphoguanosine)-(2'-O-methyl-ribonucleoside) in mRNA + S-adenosyl-L-homocysteine + H(+). Functionally, plays a role in virus budding by binding to the cell membrane and gathering the viral RNA into a nucleocapsid that forms the core of a mature virus particle. During virus entry, may induce genome penetration into the host cytoplasm after hemifusion induced by the surface proteins. Can migrate to the cell nucleus where it modulates host functions. Overcomes the anti-viral effects of host EXOC1 by sequestering and degrading the latter through the proteasome degradation pathway. Its function is as follows. Inhibits RNA silencing by interfering with host Dicer. In terms of biological role, prevents premature fusion activity of envelope proteins in trans-Golgi by binding to envelope protein E at pH6.0. After virion release in extracellular space, gets dissociated from E dimers. Acts as a chaperone for envelope protein E during intracellular virion assembly by masking and inactivating envelope protein E fusion peptide. prM is the only viral peptide matured by host furin in the trans-Golgi network probably to avoid catastrophic activation of the viral fusion activity in acidic Golgi compartment prior to virion release. prM-E cleavage is inefficient, and many virions are only partially matured. These uncleaved prM would play a role in immune evasion. Functionally, may play a role in virus budding. Exerts cytotoxic effects by activating a mitochondrial apoptotic pathway through M ectodomain. May display a viroporin activity. Its function is as follows. Binds to host cell surface receptor and mediates fusion between viral and cellular membranes. Envelope protein is synthesized in the endoplasmic reticulum in the form of heterodimer with protein prM. They play a role in virion budding in the ER, and the newly formed immature particle is covered with 60 spikes composed of heterodimer between precursor prM and envelope protein E. The virion is transported to the Golgi apparatus where the low pH causes dissociation of PrM-E heterodimers and formation of E homodimers. prM-E cleavage is inefficient, and many virions are only partially matured. These uncleaved prM would play a role in immune evasion. In terms of biological role, involved in immune evasion, pathogenesis and viral replication. Once cleaved off the polyprotein, is targeted to three destinations: the viral replication cycle, the plasma membrane and the extracellular compartment. Essential for viral replication. Required for formation of the replication complex and recruitment of other non-structural proteins to the ER-derived membrane structures. Excreted as a hexameric lipoparticle that plays a role against host immune response. Antagonizing the complement function. Binds to the host macrophages and dendritic cells. Inhibits signal transduction originating from Toll-like receptor 3 (TLR3). Disrupts the host endothelial glycocalyx layer of host pulmonary microvascular endothelial cells, inducing degradation of sialic acid and shedding of heparan sulfate proteoglycans. NS1 induces expression of sialidases, heparanase, and activates cathepsin L, which activates heparanase via enzymatic cleavage. These effects are probably linked to the endothelial hyperpermeability observed in severe dengue disease. Functionally, component of the viral RNA replication complex that functions in virion assembly and antagonizes the host immune response. Its function is as follows. Required cofactor for the serine protease function of NS3. May have membrane-destabilizing activity and form viroporins. In terms of biological role, displays three enzymatic activities: serine protease, NTPase and RNA helicase. NS3 serine protease, in association with NS2B, performs its autocleavage and cleaves the polyprotein at dibasic sites in the cytoplasm: C-prM, NS2A-NS2B, NS2B-NS3, NS3-NS4A, NS4A-2K and NS4B-NS5. NS3 RNA helicase binds RNA and unwinds dsRNA in the 3' to 5' direction. Regulates the ATPase activity of the NS3 helicase activity. NS4A allows NS3 helicase to conserve energy during unwinding. Plays a role in the inhibition of the host innate immune response. Interacts with host MAVS and thereby prevents the interaction between RIGI and MAVS. In turn, IFN-beta production is impaired. Interacts with host AUP1 which mediates induction of lipophagy in host cells and facilitates production of virus progeny particles. Functionally, functions as a signal peptide for NS4B and is required for the interferon antagonism activity of the latter. Its function is as follows. Induces the formation of ER-derived membrane vesicles where the viral replication takes place. Inhibits interferon (IFN)-induced host STAT1 phosphorylation and nuclear translocation, thereby preventing the establishment of cellular antiviral state by blocking the IFN-alpha/beta pathway. In terms of biological role, replicates the viral (+) and (-) RNA genome, and performs the capping of genomes in the cytoplasm. NS5 methylates viral RNA cap at guanine N-7 and ribose 2'-O positions. Besides its role in RNA genome replication, also prevents the establishment of cellular antiviral state by blocking the interferon-alpha/beta (IFN-alpha/beta) signaling pathway. Inhibits host TYK2 and STAT2 phosphorylation, thereby preventing activation of JAK-STAT signaling pathway. May reduce immune responses by preventing the recruitment of the host PAF1 complex to interferon-responsive genes. The sequence is that of Genome polyprotein from Dengue virus type 4 (strain Singapore/8976/1995) (DENV-4).